A 311-amino-acid chain; its full sequence is Ribonuclease Z (311 aa).

7 residues coordinate Zn(2+): H61, H63, D65, H66, H137, D207, and H263. D65 (proton acceptor) is an active-site residue.

Belongs to the RNase Z family. Homodimer. Requires Zn(2+) as cofactor.

The catalysed reaction is Endonucleolytic cleavage of RNA, removing extra 3' nucleotides from tRNA precursor, generating 3' termini of tRNAs. A 3'-hydroxy group is left at the tRNA terminus and a 5'-phosphoryl group is left at the trailer molecule.. Zinc phosphodiesterase, which displays some tRNA 3'-processing endonuclease activity. Probably involved in tRNA maturation, by removing a 3'-trailer from precursor tRNA. The protein is Ribonuclease Z of Thermococcus onnurineus (strain NA1).